The primary structure comprises 396 residues: 1-deoxy-D-xylulose 5-phosphate reductoisomerase (396 aa).

NADPH is bound by residues Thr17, Gly18, Ser19, Ile20, Asn47, and Asn130. Lys131 contributes to the 1-deoxy-D-xylulose 5-phosphate binding site. Glu132 provides a ligand contact to NADPH. Residue Asp156 coordinates Mn(2+). 4 residues coordinate 1-deoxy-D-xylulose 5-phosphate: Ser157, Glu158, Ser182, and His205. Glu158 is a Mn(2+) binding site. Residue Gly211 coordinates NADPH. Residues Ser218, Asn223, Lys224, and Glu227 each coordinate 1-deoxy-D-xylulose 5-phosphate. Glu227 lines the Mn(2+) pocket.

The protein belongs to the DXR family. Mg(2+) is required as a cofactor. It depends on Mn(2+) as a cofactor.

The catalysed reaction is 2-C-methyl-D-erythritol 4-phosphate + NADP(+) = 1-deoxy-D-xylulose 5-phosphate + NADPH + H(+). It participates in isoprenoid biosynthesis; isopentenyl diphosphate biosynthesis via DXP pathway; isopentenyl diphosphate from 1-deoxy-D-xylulose 5-phosphate: step 1/6. Catalyzes the NADPH-dependent rearrangement and reduction of 1-deoxy-D-xylulose-5-phosphate (DXP) to 2-C-methyl-D-erythritol 4-phosphate (MEP). This is 1-deoxy-D-xylulose 5-phosphate reductoisomerase from Rhizobium etli (strain ATCC 51251 / DSM 11541 / JCM 21823 / NBRC 15573 / CFN 42).